A 1429-amino-acid polypeptide reads, in one-letter code: Nitric oxide synthase 1 (1429 aa).

Positions 1-200 (MEENTFGVQQ…LQDIGEHDEL (200 aa)) are interaction with NOSIP. A PDZ domain is found at 17-99 (SVRLFKRKVG…ETHVVLILRG (83 aa)). Disordered stretches follow at residues 152–174 (VTGL…SVSQ), 214–255 (GSKA…DNDR), and 271–298 (NNPY…SRCP). Residues 160–174 (QHAQGHGQGAGSVSQ) are compositionally biased toward low complexity. The interval 163–240 (QGHGQGAGSV…TGIQVDRDLD (78 aa)) is interaction with DYNLL1/PIN. The segment covering 226-243 (AEMKDTGIQVDRDLDGKS) has biased composition (basic and acidic residues). The residue at position 280 (Ser-280) is a Phosphoserine. Positions 280 to 294 (SPTSGKQSPTKNGSP) are enriched in polar residues. Residue Ser-334 participates in (6R)-L-erythro-5,6,7,8-tetrahydrobiopterin binding. Cys-415 lines the heme b pocket. L-arginine is bound by residues Gln-478, Trp-587, Tyr-588, and Glu-592. Positions 677, 678, and 691 each coordinate (6R)-L-erythro-5,6,7,8-tetrahydrobiopterin. Residue Tyr-706 participates in heme b binding. The tract at residues 725-745 (KRRAIGFKKLAEAVKFSAKLM) is calmodulin-binding. The Flavodoxin-like domain maps to 755-935 (ATILYATETG…AFRTWAKKVF (181 aa)). FMN is bound by residues Thr-761, Glu-762, Thr-763, Lys-765, Ser-766, Ser-807, Thr-808, and Gly-812. Phosphoserine is present on residues Ser-847, Ser-857, and Ser-858. Residues Ser-886, His-891, Cys-893, Glu-919, and Gln-923 each contribute to the FMN site. Residues 990-1237 (KRVSAARLLS…VRGAPSFHLP (248 aa)) form the FAD-binding FR-type domain. Arg-1010 lines the NADP(+) pocket. Positions 1032, 1173, 1174, 1175, 1176, 1191, and 1193 each coordinate FAD. Ser-1196 lines the NADP(+) pocket. Positions 1197, 1210, 1211, and 1212 each coordinate FAD. NADP(+)-binding residues include Thr-1251, Arg-1284, Ser-1313, Arg-1314, Lys-1320, Tyr-1322, Gln-1324, Asp-1357, Thr-1398, and Arg-1400.

This sequence belongs to the NOS family. As to quaternary structure, homodimer. Interacts with DLG4 (via N-terminal tandem pair of PDZ domains); the interaction possibly being prevented by the association between NOS1 and CAPON. Forms a ternary complex with CAPON and RASD1. Forms a ternary complex with CAPON and SYN1. Interacts with ZDHHC23. Interacts with NOSIP; which may impair its synaptic location. Interacts with HTR4. Interacts with SLC6A4. Interacts with VAC14. Forms a complex with ASL, ASS1 and SLC7A1; the complex regulates cell-autonomous L-arginine synthesis and citrulline recycling while channeling extracellular L-arginine to nitric oxide synthesis pathway. Interacts with DMD; localizes NOS1 to sarcolemma in muscle cells. Interacts with DYNLL1; inhibits the nitric oxide synthase activity. Heme b serves as cofactor. FAD is required as a cofactor. The cofactor is FMN. It depends on (6R)-L-erythro-5,6,7,8-tetrahydrobiopterin as a cofactor. In terms of processing, ubiquitinated; mediated by STUB1/CHIP in the presence of Hsp70 and Hsp40 (in vitro). Isoform N-NOS-1 is expressed in brain and colorectum. Found in the Auerbach's plexus of the enteric nervous system. Isoform PNNOS is expressed in the penis, urethra, prostate, and skeletal muscle, and coexists with the cerebellar nnos in the pelvic plexus, bladder and liver, and is detectable in the cerebellum.

It is found in the cell membrane. It localises to the sarcolemma. The protein resides in the cell projection. The protein localises to the dendritic spine. It catalyses the reaction 2 L-arginine + 3 NADPH + 4 O2 + H(+) = 2 L-citrulline + 2 nitric oxide + 3 NADP(+) + 4 H2O. With respect to regulation, stimulated by calcium/calmodulin. Inhibited by DYNLL1 that prevents the dimerization of the protein. Inhibited by NOSIP. Produces nitric oxide (NO) which is a messenger molecule with diverse functions throughout the body. In the brain and peripheral nervous system, NO displays many properties of a neurotransmitter. Inhibitory transmitter for non-adrenergic and non-cholinergic nerves in the colorectum. Probably has nitrosylase activity and mediates cysteine S-nitrosylation of cytoplasmic target proteins such SRR. Inhibitory transmitter for non-adrenergic and non-cholinergic nerves in the colorectum. The sequence is that of Nitric oxide synthase 1 from Rattus norvegicus (Rat).